The sequence spans 191 residues: Large ribosomal subunit protein uL5 (191 aa).

Belongs to the universal ribosomal protein uL5 family. In terms of assembly, part of the 50S ribosomal subunit; part of the 5S rRNA/L5/L18/L25 subcomplex. Contacts the 5S rRNA and the P site tRNA. Forms a bridge to the 30S subunit in the 70S ribosome.

This is one of the proteins that bind and probably mediate the attachment of the 5S RNA into the large ribosomal subunit, where it forms part of the central protuberance. In the 70S ribosome it contacts protein S13 of the 30S subunit (bridge B1b), connecting the 2 subunits; this bridge is implicated in subunit movement. Contacts the P site tRNA; the 5S rRNA and some of its associated proteins might help stabilize positioning of ribosome-bound tRNAs. The sequence is that of Large ribosomal subunit protein uL5 from Corynebacterium glutamicum (strain R).